We begin with the raw amino-acid sequence, 652 residues long: Acetyl-coenzyme A synthetase (652 aa).

CoA is bound by residues 191 to 194 (RAGR), Thr311, and Asn335. ATP contacts are provided by residues 387 to 389 (GEP), 411 to 416 (DTWWQT), Asp500, and Arg515. Ser523 is a CoA binding site. Position 526 (Arg526) interacts with ATP. The Mg(2+) site is built by Val537, His539, and Ile542. Arg584 contributes to the CoA binding site. Lys609 carries the N6-acetyllysine modification.

This sequence belongs to the ATP-dependent AMP-binding enzyme family. Mg(2+) is required as a cofactor. In terms of processing, acetylated. Deacetylation by the SIR2-homolog deacetylase activates the enzyme.

It catalyses the reaction acetate + ATP + CoA = acetyl-CoA + AMP + diphosphate. In terms of biological role, catalyzes the conversion of acetate into acetyl-CoA (AcCoA), an essential intermediate at the junction of anabolic and catabolic pathways. Acs undergoes a two-step reaction. In the first half reaction, Acs combines acetate with ATP to form acetyl-adenylate (AcAMP) intermediate. In the second half reaction, it can then transfer the acetyl group from AcAMP to the sulfhydryl group of CoA, forming the product AcCoA. Enables the cell to use acetate during aerobic growth to generate energy via the TCA cycle, and biosynthetic compounds via the glyoxylate shunt. Acetylates CheY, the response regulator involved in flagellar movement and chemotaxis. The chain is Acetyl-coenzyme A synthetase from Yersinia pseudotuberculosis serotype I (strain IP32953).